A 338-amino-acid polypeptide reads, in one-letter code: Nicotinate-nucleotide--dimethylbenzimidazole phosphoribosyltransferase (338 aa).

The active-site Proton acceptor is the Glu-305.

Belongs to the CobT family.

The enzyme catalyses 5,6-dimethylbenzimidazole + nicotinate beta-D-ribonucleotide = alpha-ribazole 5'-phosphate + nicotinate + H(+). Its pathway is nucleoside biosynthesis; alpha-ribazole biosynthesis; alpha-ribazole from 5,6-dimethylbenzimidazole: step 1/2. Its function is as follows. Catalyzes the synthesis of alpha-ribazole-5'-phosphate from nicotinate mononucleotide (NAMN) and 5,6-dimethylbenzimidazole (DMB). This Novosphingobium aromaticivorans (strain ATCC 700278 / DSM 12444 / CCUG 56034 / CIP 105152 / NBRC 16084 / F199) protein is Nicotinate-nucleotide--dimethylbenzimidazole phosphoribosyltransferase.